The primary structure comprises 226 residues: MENPAFKRAIRSFVLRQGHLSAGQQRAMDEGMPKWGIEYRPETMDLEQVFGRAAPKILEIGFGMGGATAEIAAANPDNDYLGIEVHGPGVGNLCKLIAEKELTNLRLMRHDAVEVLDNMLADGSLDGVHIFFPDPWHKKRHNKRRLIQAPLVEKLAKKLKPGGYFHAATDWEDYAIQILEVLNGNADLENTADGYAPRPDYRPLTKFEARGIKLGHGVWDVIFRRK.

The S-adenosyl-L-methionine site is built by E59, E84, D111, and D134. The active site involves D134. K138 is a substrate binding site. The segment at 140–145 is interaction with RNA; it reads RHNKRR. Substrate-binding positions include D170 and 205–208; that span reads TKFE.

The protein belongs to the class I-like SAM-binding methyltransferase superfamily. TrmB family.

It catalyses the reaction guanosine(46) in tRNA + S-adenosyl-L-methionine = N(7)-methylguanosine(46) in tRNA + S-adenosyl-L-homocysteine. Its pathway is tRNA modification; N(7)-methylguanine-tRNA biosynthesis. Functionally, catalyzes the formation of N(7)-methylguanine at position 46 (m7G46) in tRNA. This chain is tRNA (guanine-N(7)-)-methyltransferase, found in Chromobacterium violaceum (strain ATCC 12472 / DSM 30191 / JCM 1249 / CCUG 213 / NBRC 12614 / NCIMB 9131 / NCTC 9757 / MK).